Consider the following 347-residue polypeptide: NADH-ubiquinone oxidoreductase chain 2 (347 aa).

11 helical membrane passes run Pro3 to Ser23, His25 to Met45, Tyr59 to Leu79, Thr96 to Pro116, Ile122 to Leu142, Leu153 to Thr173, Ile178 to Pro198, Met200 to Met220, Met237 to Leu257, Glu274 to Met294, and Phe325 to Ile345.

It belongs to the complex I subunit 2 family. Core subunit of respiratory chain NADH dehydrogenase (Complex I) which is composed of 45 different subunits. Interacts with TMEM242.

Its subcellular location is the mitochondrion inner membrane. It catalyses the reaction a ubiquinone + NADH + 5 H(+)(in) = a ubiquinol + NAD(+) + 4 H(+)(out). Functionally, core subunit of the mitochondrial membrane respiratory chain NADH dehydrogenase (Complex I) which catalyzes electron transfer from NADH through the respiratory chain, using ubiquinone as an electron acceptor. Essential for the catalytic activity and assembly of complex I. This is NADH-ubiquinone oxidoreductase chain 2 from Paradoxurus hermaphroditus (Asian palm civet).